A 625-amino-acid polypeptide reads, in one-letter code: Autophagy-related protein 20 (625 aa).

The disordered stretch occupies residues 1 to 59 (MNPNDNNLFGDIEQDNNPSFYGNQSFLRDPYGKSKQTCPPSVTSNGDPSITNDDNNSAH). Polar residues-rich tracts occupy residues 15–26 (DNNPSFYGNQSF) and 34–59 (SKQT…NSAH). The region spanning 79 to 202 (NDPNLQINVI…HKFLDPNYEL (124 aa)) is the PX domain. Positions 118, 120, 144, and 167 each coordinate a 1,2-diacyl-sn-glycero-3-phospho-(1D-myo-inositol-3-phosphate).

Belongs to the sorting nexin family.

It is found in the endosome membrane. It localises to the preautophagosomal structure membrane. Functionally, required for cytoplasm to vacuole transport (Cvt), pexophagy and mitophagy. Also involved in endoplasmic reticulum-specific autophagic process and is essential for the survival of cells subjected to severe ER stress. Functions in protein retrieval from the endocytic pathway. This Debaryomyces hansenii (strain ATCC 36239 / CBS 767 / BCRC 21394 / JCM 1990 / NBRC 0083 / IGC 2968) (Yeast) protein is Autophagy-related protein 20 (ATG20).